The sequence spans 476 residues: 3-isopropylmalate dehydratase large subunit (476 aa).

3 residues coordinate [4Fe-4S] cluster: cysteine 357, cysteine 417, and cysteine 420.

The protein belongs to the aconitase/IPM isomerase family. LeuC type 1 subfamily. Heterodimer of LeuC and LeuD. The cofactor is [4Fe-4S] cluster.

The enzyme catalyses (2R,3S)-3-isopropylmalate = (2S)-2-isopropylmalate. Its pathway is amino-acid biosynthesis; L-leucine biosynthesis; L-leucine from 3-methyl-2-oxobutanoate: step 2/4. Catalyzes the isomerization between 2-isopropylmalate and 3-isopropylmalate, via the formation of 2-isopropylmaleate. This chain is 3-isopropylmalate dehydratase large subunit, found in Mycobacterium leprae (strain TN).